Here is a 532-residue protein sequence, read N- to C-terminus: Light-independent protochlorophyllide reductase subunit B (532 aa).

A [4Fe-4S] cluster-binding site is contributed by Asp36. Asp318 acts as the Proton donor in catalysis. 453–454 (GM) is a substrate binding site.

Belongs to the ChlB/BchB/BchZ family. Protochlorophyllide reductase is composed of three subunits; ChlL, ChlN and ChlB. Forms a heterotetramer of two ChlB and two ChlN subunits. It depends on [4Fe-4S] cluster as a cofactor.

The protein localises to the plastid. It localises to the chloroplast. It carries out the reaction chlorophyllide a + oxidized 2[4Fe-4S]-[ferredoxin] + 2 ADP + 2 phosphate = protochlorophyllide a + reduced 2[4Fe-4S]-[ferredoxin] + 2 ATP + 2 H2O. Its pathway is porphyrin-containing compound metabolism; chlorophyll biosynthesis (light-independent). Its function is as follows. Component of the dark-operative protochlorophyllide reductase (DPOR) that uses Mg-ATP and reduced ferredoxin to reduce ring D of protochlorophyllide (Pchlide) to form chlorophyllide a (Chlide). This reaction is light-independent. The NB-protein (ChlN-ChlB) is the catalytic component of the complex. This Tetradesmus obliquus (Green alga) protein is Light-independent protochlorophyllide reductase subunit B.